The sequence spans 206 residues: Ribosomal RNA large subunit methyltransferase E (206 aa).

S-adenosyl-L-methionine contacts are provided by G60, W62, D80, D96, and D121. K161 acts as the Proton acceptor in catalysis.

It belongs to the class I-like SAM-binding methyltransferase superfamily. RNA methyltransferase RlmE family.

It localises to the cytoplasm. The catalysed reaction is uridine(2552) in 23S rRNA + S-adenosyl-L-methionine = 2'-O-methyluridine(2552) in 23S rRNA + S-adenosyl-L-homocysteine + H(+). In terms of biological role, specifically methylates the uridine in position 2552 of 23S rRNA at the 2'-O position of the ribose in the fully assembled 50S ribosomal subunit. The protein is Ribosomal RNA large subunit methyltransferase E of Nitrosomonas eutropha (strain DSM 101675 / C91 / Nm57).